Consider the following 80-residue polypeptide: UPF0180 protein BPUM_1317 (80 aa).

The protein belongs to the UPF0180 family.

The polypeptide is UPF0180 protein BPUM_1317 (Bacillus pumilus (strain SAFR-032)).